A 378-amino-acid polypeptide reads, in one-letter code: MEVAELGFPETAVSQSRICLCAVLCGHWDFADMMVIRSLSLIRLEGVEGRDPVGGGNLTNKRPSCAPSPQDLSAQWKQLEDRGASSRRVDMAALFQEASSCPVCSDYLEKPMSLECGCAVCLKCINSLQKEPHGEDLLCCCSSMVSRKNKIRRNRQLERLASHIKELEPKLKKILQMNPRMRKFQVDMTLDANTANNFLLISDDLRSVRSGRIRQNRQDLAERFDVSVCILGSPRFTCGRHCWEVDVGTSTEWDLGVCRESVHRKGRIQLTTELGFWTVSLRDGGRLSATTVPLTFLFVDRKLQRVGIFLDMGMQNVSFFDAESGSHVYTFRSVSAEEPLRPFLAPSVPPNGDQGVLSICPLMNSGTTDAPVRPGEAK.

An RING-type; degenerate zinc finger spans residues 101–143 (CPVCSDYLEKPMSLECGCAVCLKCINSLQKEPHGEDLLCCCSS). Residues 168-362 (EPKLKKILQM…DQGVLSICPL (195 aa)) form the B30.2/SPRY domain.

As to expression, seems to be expressed in prostate and less abundantly in adult brain, fetal liver, and fetal kidney.

In Homo sapiens (Human), this protein is Ret finger protein-like 2 (RFPL2).